Consider the following 374-residue polypeptide: Amino acid binding protein (374 aa).

Positions 1–27 (MSKKLFRKGILALAVSSVMGLSTHALA) are cleaved as a signal peptide.

This sequence belongs to the leucine-binding protein family.

Its subcellular location is the periplasm. Binds primarily proteinogenic amino acids. This Pseudomonas aeruginosa (strain ATCC 15692 / DSM 22644 / CIP 104116 / JCM 14847 / LMG 12228 / 1C / PRS 101 / PAO1) protein is Amino acid binding protein.